Consider the following 291-residue polypeptide: MTQSSSVERLVGEIDEFGYTVVEDVLDADSVAAYLADTRRLERELPTVIANSTTVVKGLARPGHVPVDRVDHDWVRIDNLLLHGTRYEALPVHPKLLPVIEGVLGRDCLLSWCMTSNQLPGAVAQRLHCDDEMYPLPRPHQPLLCNALIALCDFTADNGATQVVPGSHRWPERPSPPYPEGKPVEINAGDALIWNGSLWHTAAANRTDAPRPALTINFCVGFVRQQVNQQLSIPRELVRCFEPRLQELIGYGLYAGKMGRIDWRPPADYLDADRHPFLDAVADRLQTSVRL.

It belongs to the PhyH family.

This is an uncharacterized protein from Mycobacterium bovis (strain ATCC BAA-935 / AF2122/97).